The following is a 157-amino-acid chain: Small ribosomal subunit protein uS7 (157 aa).

Belongs to the universal ribosomal protein uS7 family. Part of the 30S ribosomal subunit. Contacts proteins S9 and S11.

Its function is as follows. One of the primary rRNA binding proteins, it binds directly to 16S rRNA where it nucleates assembly of the head domain of the 30S subunit. Is located at the subunit interface close to the decoding center, probably blocks exit of the E-site tRNA. This Albidiferax ferrireducens (strain ATCC BAA-621 / DSM 15236 / T118) (Rhodoferax ferrireducens) protein is Small ribosomal subunit protein uS7.